The following is a 347-amino-acid chain: MPARLRPELTELPAYTPGRNVPGAIKLASNETVQEPLPSVRAALAEAGSLINRYPDNGYAELRSHLAKHVDMPPEHIAVGCGSVSLCQQLVQITATVGDEVLFGWRSFETYPLVVRVAGATPVQVPLVDHTYDLAAMAAAVTDVTRLIFVCNPNNPTGTVVRPAELRRFVESVPPHILIAIDEAYVEYVREDFTDSLALVREHPNVVVLRTFSKAYGLAGLRVGYAVGDPDVITTLGKVYVPFSASSLAQAAAVASLGAAEELLARTNDVVTERARVTSALREAGYQVPPSQANFVWLPLGERSTEFAQASAEARIIVRPFGTDGVRVTIGAPMENDAFLKFSRAWR.

At lysine 214 the chain carries N6-(pyridoxal phosphate)lysine.

It belongs to the class-II pyridoxal-phosphate-dependent aminotransferase family. Homodimer. Requires pyridoxal 5'-phosphate as cofactor.

It carries out the reaction an aromatic L-alpha-amino acid + 2-oxoglutarate = an aromatic oxo-acid + L-glutamate. In terms of biological role, aminotransferase that catalyzes the conversion of aromatic amino acids and 2-oxoglutarate into corresponding aromatic oxo acids and L-glutamate. The protein is Aromatic amino acid aminotransferase of Mycobacteroides abscessus (strain ATCC 19977 / DSM 44196 / CCUG 20993 / CIP 104536 / JCM 13569 / NCTC 13031 / TMC 1543 / L948) (Mycobacterium abscessus).